Here is a 75-residue protein sequence, read N- to C-terminus: Putative defensin-like protein 119 (75 aa).

Residues 1–25 (MAKSTIFAIFMIVFVLGMVTKETKG) form the signal peptide. Intrachain disulfides connect C29-C73, C39-C58, C44-C67, and C48-C69.

The protein belongs to the DEFL family.

It is found in the secreted. This Arabidopsis thaliana (Mouse-ear cress) protein is Putative defensin-like protein 119 (LCR53).